We begin with the raw amino-acid sequence, 374 residues long: Glutamate 5-kinase (374 aa).

Lysine 16 is a binding site for ATP. Substrate-binding residues include serine 56, aspartate 143, and asparagine 155. ATP is bound by residues threonine 175–aspartate 176 and serine 217–lysine 223. In terms of domain architecture, PUA spans arginine 282–lysine 360.

It belongs to the glutamate 5-kinase family.

The protein localises to the cytoplasm. It carries out the reaction L-glutamate + ATP = L-glutamyl 5-phosphate + ADP. It participates in amino-acid biosynthesis; L-proline biosynthesis; L-glutamate 5-semialdehyde from L-glutamate: step 1/2. Catalyzes the transfer of a phosphate group to glutamate to form L-glutamate 5-phosphate. The polypeptide is Glutamate 5-kinase (Marinomonas sp. (strain MWYL1)).